Here is a 117-residue protein sequence, read N- to C-terminus: Large ribosomal subunit protein bL20 (117 aa).

The protein belongs to the bacterial ribosomal protein bL20 family.

Functionally, binds directly to 23S ribosomal RNA and is necessary for the in vitro assembly process of the 50S ribosomal subunit. It is not involved in the protein synthesizing functions of that subunit. The protein is Large ribosomal subunit protein bL20 of Rickettsia akari (strain Hartford).